Reading from the N-terminus, the 893-residue chain is Alanine--tRNA ligase (893 aa).

4 residues coordinate Zn(2+): H574, H578, C678, and H682.

The protein belongs to the class-II aminoacyl-tRNA synthetase family. Zn(2+) serves as cofactor.

Its subcellular location is the cytoplasm. The catalysed reaction is tRNA(Ala) + L-alanine + ATP = L-alanyl-tRNA(Ala) + AMP + diphosphate. In terms of biological role, catalyzes the attachment of alanine to tRNA(Ala) in a two-step reaction: alanine is first activated by ATP to form Ala-AMP and then transferred to the acceptor end of tRNA(Ala). Also edits incorrectly charged Ser-tRNA(Ala) and Gly-tRNA(Ala) via its editing domain. In Bifidobacterium longum (strain NCC 2705), this protein is Alanine--tRNA ligase.